A 158-amino-acid chain; its full sequence is Hypoxanthine DNA glycosylase (158 aa).

Asn-39 is a catalytic residue.

It belongs to the uracil-DNA glycosylase (UDG) superfamily. Type 6 (HDG) family.

Functionally, excises hypoxanthine, a deamination product of adenine, from double-stranded DNA. Acts on double-stranded DNA containing G/I, T/I, A/I and C/I base pairs, but not on single-stranded inosine-containing DNA. Also has minor xanthine DNA glycosylase activity. Lacks any detectable uracil-DNA glycosylase activity. The chain is Hypoxanthine DNA glycosylase from Methanosarcina barkeri (strain Fusaro / DSM 804).